The sequence spans 954 residues: Valine--tRNA ligase (954 aa).

A 'HIGH' region motif is present at residues 48 to 58; the sequence is PNVTGSLHMGH. Positions 560-564 match the 'KMSKS' region motif; the sequence is KMSKS. Lys563 contacts ATP. Residues 883–953 adopt a coiled-coil conformation; it reads AGFINKEAEL…LKQQYLAIEA (71 aa).

Belongs to the class-I aminoacyl-tRNA synthetase family. ValS type 1 subfamily. Monomer.

It is found in the cytoplasm. It catalyses the reaction tRNA(Val) + L-valine + ATP = L-valyl-tRNA(Val) + AMP + diphosphate. Catalyzes the attachment of valine to tRNA(Val). As ValRS can inadvertently accommodate and process structurally similar amino acids such as threonine, to avoid such errors, it has a 'posttransfer' editing activity that hydrolyzes mischarged Thr-tRNA(Val) in a tRNA-dependent manner. This Pasteurella multocida (strain Pm70) protein is Valine--tRNA ligase.